The primary structure comprises 556 residues: 2-succinyl-5-enolpyruvyl-6-hydroxy-3-cyclohexene-1-carboxylate synthase (556 aa).

This sequence belongs to the TPP enzyme family. MenD subfamily. As to quaternary structure, homodimer. Mg(2+) is required as a cofactor. The cofactor is Mn(2+). It depends on thiamine diphosphate as a cofactor.

It catalyses the reaction isochorismate + 2-oxoglutarate + H(+) = 5-enolpyruvoyl-6-hydroxy-2-succinyl-cyclohex-3-ene-1-carboxylate + CO2. It participates in quinol/quinone metabolism; 1,4-dihydroxy-2-naphthoate biosynthesis; 1,4-dihydroxy-2-naphthoate from chorismate: step 2/7. The protein operates within quinol/quinone metabolism; menaquinone biosynthesis. Functionally, catalyzes the thiamine diphosphate-dependent decarboxylation of 2-oxoglutarate and the subsequent addition of the resulting succinic semialdehyde-thiamine pyrophosphate anion to isochorismate to yield 2-succinyl-5-enolpyruvyl-6-hydroxy-3-cyclohexene-1-carboxylate (SEPHCHC). The protein is 2-succinyl-5-enolpyruvyl-6-hydroxy-3-cyclohexene-1-carboxylate synthase of Mycobacterium leprae (strain Br4923).